Reading from the N-terminus, the 476-residue chain is ATP synthase subunit beta (476 aa).

154 to 161 (GGAGVGKT) serves as a coordination point for ATP.

Belongs to the ATPase alpha/beta chains family. As to quaternary structure, F-type ATPases have 2 components, CF(1) - the catalytic core - and CF(0) - the membrane proton channel. CF(1) has five subunits: alpha(3), beta(3), gamma(1), delta(1), epsilon(1). CF(0) has three main subunits: a(1), b(2) and c(9-12). The alpha and beta chains form an alternating ring which encloses part of the gamma chain. CF(1) is attached to CF(0) by a central stalk formed by the gamma and epsilon chains, while a peripheral stalk is formed by the delta and b chains.

Its subcellular location is the cell inner membrane. The catalysed reaction is ATP + H2O + 4 H(+)(in) = ADP + phosphate + 5 H(+)(out). Its function is as follows. Produces ATP from ADP in the presence of a proton gradient across the membrane. The catalytic sites are hosted primarily by the beta subunits. In Nitrobacter hamburgensis (strain DSM 10229 / NCIMB 13809 / X14), this protein is ATP synthase subunit beta.